Reading from the N-terminus, the 348-residue chain is Rhodopsin (348 aa).

Met-1 is modified (N-acetylmethionine). Residues 1–36 (MNGTEGPNFYVPFSNKTGVVRSPFEAPQYYLAEPWQ) lie on the Extracellular side of the membrane. Residues Asn-2 and Asn-15 are each glycosylated (N-linked (GlcNAc...) asparagine). The chain crosses the membrane as a helical span at residues 37-61 (FSMLAAYMFLLIVLGFPINFLTLYV). The Cytoplasmic segment spans residues 62 to 73 (TVQHKKLRTPLN). A helical membrane pass occupies residues 74–96 (YILLNLAVADLFMVFGGFTTTLY). Over 97 to 110 (TSLHGYFVFGPTGC) the chain is Extracellular. Cys-110 and Cys-187 form a disulfide bridge. A helical membrane pass occupies residues 111–133 (NLEGFFATLGGEIALWSLVVLAI). The 'Ionic lock' involved in activated form stabilization motif lies at 134–136 (ERY). The Cytoplasmic portion of the chain corresponds to 134-152 (ERYVVVCKPMSNFRFGENH). A helical transmembrane segment spans residues 153 to 173 (AIMGVAFTWVMALACAAPPLV). At 174-202 (GWSRYIPQGMQCSCGALYFTLKPEINNES) the chain is on the extracellular side. Zn(2+) is bound at residue Glu-201. Residues 203-224 (FVIYMFVVHFSIPLIVIFFCYG) traverse the membrane as a helical segment. The Cytoplasmic segment spans residues 225 to 252 (QLVFTVKEAAAQQQESATTQKAEKEVTR). A helical transmembrane segment spans residues 253-274 (MVIIMVIAFLICWLPYAGVAFY). The Extracellular portion of the chain corresponds to 275–286 (IFTHQGSDFGPI). Residue Gln-279 participates in Zn(2+) binding. Residues 287-308 (FMTIPAFFAKSSSVYNPVIYIM) traverse the membrane as a helical segment. N6-(retinylidene)lysine is present on Lys-296. Residues 309–348 (MNKQFRNCMLTTLCCGKNPLGDDEASTTVSKTETSQVAPA) are Cytoplasmic-facing. Residues Cys-322 and Cys-323 are each lipidated (S-palmitoyl cysteine). Residues 330–348 (DDEASTTVSKTETSQVAPA) are interaction with SAG. The residue at position 334 (Ser-334) is a Phosphoserine. Residue Ser-334 is modified to Phosphoserine; by RK and GRK7. Phosphothreonine occurs at positions 335 and 336. Phosphothreonine; by RK and GRK7 is present on residues Thr-335 and Thr-336. Ser-338 carries the post-translational modification Phosphoserine; by RK and GRK7. Thr-340 and Thr-342 each carry phosphothreonine. Position 343 is a phosphoserine; by RK and GRK7 (Ser-343).

Belongs to the G-protein coupled receptor 1 family. Opsin subfamily. In terms of assembly, homodimer. May form a complex composed of RHO, GRK1 and RCVRN in a Ca(2+)-dependent manner; RCVRN prevents the interaction between GRK1 and RHO. Interacts with GRK1. Interacts (phosphorylated form) with SAG. Interacts with GNAT1. Interacts with GNAT3. SAG and G-proteins compete for a common binding site. Interacts with PRCD; the interaction promotes PRCD stability. Forms a complex with ASAP1 and ARF4. Forms a complex with ASAP1, RAB11A, Rabin8/RAB3IP, ARF4 and RAB11FIP3; the complex regulates Golgi-to-cilia rhodopsin/RHO transport in photoreceptors. In terms of processing, phosphorylated on some or all of the serine and threonine residues present in the C-terminal region. Post-translationally, contains one covalently linked retinal chromophore. Upon light absorption, the covalently bound 11-cis-retinal is converted to all-trans-retinal. After hydrolysis of the Schiff base and release of the covalently bound all-trans-retinal, active rhodopsin is regenerated by binding of a fresh molecule of 11-cis-retinal.

It localises to the membrane. The protein resides in the cell projection. Its subcellular location is the cilium. The protein localises to the photoreceptor outer segment. In terms of biological role, photoreceptor required for image-forming vision at low light intensity. Required for photoreceptor cell viability after birth. Light-induced isomerization of 11-cis to all-trans retinal triggers a conformational change that activates signaling via G-proteins. Subsequent receptor phosphorylation mediates displacement of the bound G-protein alpha subunit by the arrestin SAG and terminates signaling. The sequence is that of Rhodopsin (RHO) from Ovis aries (Sheep).